The sequence spans 411 residues: Protein translocase subunit SecY (411 aa).

A run of 10 helical transmembrane segments spans residues 11-31, 52-72, 111-131, 135-155, 163-180, 197-217, 253-273, 291-311, 349-369, and 377-397; these read IIFT…PVPG, IFSG…VPYI, ALGW…PYVF, FAFV…IMWL, GIGN…VSGL, SLKF…TICV, VMPI…TQII, LYLL…TSIV, TFLG…IEKV, and GLGA…AKQI.

This sequence belongs to the SecY/SEC61-alpha family. In terms of assembly, component of the plastid Sec protein translocase complex, which is composed of at least SecY, SecE and SecG.

The protein resides in the plastid. It is found in the chloroplast thylakoid membrane. The central subunit of the protein translocation channel SecYE. Consists of two halves formed by TMs 1-5 and 6-10. These two domains form a lateral gate at the front which open onto the bilayer between TMs 2 and 7, and are clamped together by SecE at the back. The channel is closed by both a pore ring composed of hydrophobic SecY resides and a short helix (helix 2A) on the extracellular side of the membrane which forms a plug. This is Protein translocase subunit SecY from Pyropia yezoensis (Susabi-nori).